Consider the following 91-residue polypeptide: Small ribosomal subunit protein uS19 (91 aa).

It belongs to the universal ribosomal protein uS19 family.

In terms of biological role, protein S19 forms a complex with S13 that binds strongly to the 16S ribosomal RNA. This is Small ribosomal subunit protein uS19 from Neorickettsia sennetsu (strain ATCC VR-367 / Miyayama) (Ehrlichia sennetsu).